We begin with the raw amino-acid sequence, 307 residues long: Aspartate carbamoyltransferase catalytic subunit (307 aa).

Residues Arg54 and Thr55 each contribute to the carbamoyl phosphate site. Lys83 contributes to the L-aspartate binding site. The carbamoyl phosphate site is built by Arg104, His132, and Gln135. 2 residues coordinate L-aspartate: Arg165 and Arg228. Carbamoyl phosphate is bound by residues Leu267 and Pro268.

It belongs to the aspartate/ornithine carbamoyltransferase superfamily. ATCase family. Heterododecamer (2C3:3R2) of six catalytic PyrB chains organized as two trimers (C3), and six regulatory PyrI chains organized as three dimers (R2).

The catalysed reaction is carbamoyl phosphate + L-aspartate = N-carbamoyl-L-aspartate + phosphate + H(+). Its pathway is pyrimidine metabolism; UMP biosynthesis via de novo pathway; (S)-dihydroorotate from bicarbonate: step 2/3. Its function is as follows. Catalyzes the condensation of carbamoyl phosphate and aspartate to form carbamoyl aspartate and inorganic phosphate, the committed step in the de novo pyrimidine nucleotide biosynthesis pathway. This is Aspartate carbamoyltransferase catalytic subunit from Clostridium botulinum (strain Okra / Type B1).